The chain runs to 2670 residues: Inositol 1,4,5-trisphosphate-gated calcium channel ITPR3 (2670 aa).

Topologically, residues 1 to 2233 (MNEMSSFLHI…YVEGASTGVL (2233 aa)) are cytoplasmic. MIR domains are found at residues 113–173 (GDVV…LRSN), 174–224 (GDNV…INLF), 232–288 (EEVL…VEVV), 295–372 (GGAG…LDPT), and 378–434 (DSFV…IVSV). The 1D-myo-inositol 1,4,5-trisphosphate site is built by Arg266, Leu269, and Arg270. Positions 503, 507, 510, 567, 568, and 569 each coordinate 1D-myo-inositol 1,4,5-trisphosphate. Residue Arg743 coordinates Ca(2+). Ser916 and Ser934 each carry phosphoserine. 2 residues coordinate Ca(2+): Glu1122 and Glu1125. A compositionally biased stretch (basic and acidic residues) spans 1138–1153 (EVEAGATKDKKERPSD). Disordered stretches follow at residues 1138–1164 (EVEA…HGEK) and 1807–1835 (NMSD…SFSM). Phosphoserine occurs at positions 1813, 1832, and 1834. 2 residues coordinate Ca(2+): Glu1881 and Glu1945. Positions 1995, 2148, and 2151 each coordinate ATP. Residues 2234–2254 (GSPLISLLFWILICFSIAALF) traverse the membrane as a helical segment. Residues 2255-2262 (TKRYSVRP) are Extracellular-facing. Residues 2263-2283 (LIVALILRSIYYLGIGPTLNI) traverse the membrane as a helical segment. Topologically, residues 2284-2292 (LGALNLTNK) are cytoplasmic. A helical transmembrane segment spans residues 2293 to 2310 (IVFVVSFVGNRGTFIRGY). At 2311-2324 (KAMVMDMEFLYHVG) the chain is on the extracellular side. A helical membrane pass occupies residues 2325 to 2345 (YILTSVLGLFAHELFYSILLF). At 2346-2367 (DLIYREETLFNVIKSVTRNGRS) the chain is on the cytoplasmic side. The helical transmembrane segment at 2368–2388 (ILLTALLALILVYLFSIVGFL) threads the bilayer. The Extracellular segment spans residues 2389 to 2495 (FLKDDFILEV…ESLFPARVVY (107 aa)). Cys2454 and Cys2460 are joined by a disulfide. A helical membrane pass occupies residues 2496 to 2516 (DLLFFFIVIIIVLNLIFGVII). Over 2517–2670 (DTFADLRSEK…FVDVQNCMSR (154 aa)) the chain is Cytoplasmic. Positions 2537 and 2538 each coordinate ATP. Cys2537 provides a ligand contact to Zn(2+). 2 residues coordinate Zn(2+): Cys2540 and His2557. Lys2559, His2562, Asn2563, and Met2564 together coordinate ATP. A Zn(2+)-binding site is contributed by His2562. Residue Thr2580 participates in Ca(2+) binding. A phosphoserine mark is found at Ser2608 and Ser2669.

The protein belongs to the InsP3 receptor family. Homodimer. Homotetramer. Interacts with TRPC1, TRPC3, TRPC4. Interacts with TRPV4. Interacts with SIGMAR1. Found in a complex with AKT1 and PML; this interaction modulates IP3R3-phosphorylation and in turn ITPR3-dependent calcium release. Interacts with IRAG2 (via coiled-coil domain). Interacts with CABP1. Interacts with TMBIM4/LFG4. Interacts with CEMIP. Interacts with TESPA1. Interacts with TMEM203. Interacts with BOK; regulates ITPR3 expression. Interacts with BCL2L10. Interacts with CHGA and CHGB. In terms of processing, phosphorylated by AKT1 on serine and/or threonine residues.

It localises to the endoplasmic reticulum membrane. Its subcellular location is the cytoplasmic vesicle. It is found in the secretory vesicle membrane. The catalysed reaction is Ca(2+)(in) = Ca(2+)(out). Inositol 1,4,5-trisphosphate-gated calcium channel is regulated by cytosolic calcium in a biphasic manner. At low concentrations, cytosolic calcium binds at a high-affinity juxtamembrane domain (JD) calcium binding site, allowing ITPR3 to activate by escaping a low-energy resting state through an ensemble of preactivated states. At high cytosolic calcium concentrations, ITPR3 preferentially enters an inhibited state stabilized by calcium binding at a second, low-affinity cytoplasmic domain (CD) calcium binding site. In terms of biological role, inositol 1,4,5-trisphosphate-gated calcium channel that, upon 1D-myo-inositol 1,4,5-trisphosphate binding, transports calcium from the endoplasmic reticulum lumen to cytoplasm, thus releasing the intracellular calcium and therefore participates in cellular calcium ion homeostasis. 1D-myo-inositol 1,4,5-trisphosphate binds to the ligand-free channel without altering its global conformation, yielding the low-energy resting state, then progresses through resting-to preactivated transitions to the higher energy preactivated state, which increases affinity for calcium, promoting binding of the low basal cytosolic calcium at the juxtamembrane domain (JD) site, favoring the transition through the ensemble of high-energy intermediate states along the trajectory to the fully-open activated state. Upon opening, releases calcium in the cytosol where it can bind to the low-affinity cytoplasmic domain (CD) site and stabilizes the inhibited state to terminate calcium release. The polypeptide is Inositol 1,4,5-trisphosphate-gated calcium channel ITPR3 (Mus musculus (Mouse)).